The primary structure comprises 192 residues: UPF0301 protein Bcep18194_A3962 (192 aa).

This sequence belongs to the UPF0301 (AlgH) family.

The protein is UPF0301 protein Bcep18194_A3962 of Burkholderia lata (strain ATCC 17760 / DSM 23089 / LMG 22485 / NCIMB 9086 / R18194 / 383).